The primary structure comprises 183 residues: Dual-action ribosomal maturation protein DarP (183 aa).

The tract at residues 1–27 (MSSHSQEPVGEENFDDSEYDRPSKSQV) is disordered. Residues 9–18 (VGEENFDDSE) show a composition bias toward acidic residues.

It belongs to the DarP family.

The protein resides in the cytoplasm. Its function is as follows. Member of a network of 50S ribosomal subunit biogenesis factors which assembles along the 30S-50S interface, preventing incorrect 23S rRNA structures from forming. Promotes peptidyl transferase center (PTC) maturation. The chain is Dual-action ribosomal maturation protein DarP from Bordetella parapertussis (strain 12822 / ATCC BAA-587 / NCTC 13253).